A 291-amino-acid polypeptide reads, in one-letter code: NAD kinase (291 aa).

Asp-73 (proton acceptor) is an active-site residue. Residues 73 to 74, 147 to 148, Arg-175, Asp-177, and Gln-246 each bind NAD(+); these read DG and ND.

It belongs to the NAD kinase family. The cofactor is a divalent metal cation.

It localises to the cytoplasm. The catalysed reaction is NAD(+) + ATP = ADP + NADP(+) + H(+). Involved in the regulation of the intracellular balance of NAD and NADP, and is a key enzyme in the biosynthesis of NADP. Catalyzes specifically the phosphorylation on 2'-hydroxyl of the adenosine moiety of NAD to yield NADP. This chain is NAD kinase, found in Chromobacterium violaceum (strain ATCC 12472 / DSM 30191 / JCM 1249 / CCUG 213 / NBRC 12614 / NCIMB 9131 / NCTC 9757 / MK).